Here is a 230-residue protein sequence, read N- to C-terminus: UPF0173 metal-dependent hydrolase SPO2976 (230 aa).

The protein belongs to the UPF0173 family.

The polypeptide is UPF0173 metal-dependent hydrolase SPO2976 (Ruegeria pomeroyi (strain ATCC 700808 / DSM 15171 / DSS-3) (Silicibacter pomeroyi)).